A 152-amino-acid chain; its full sequence is SsrA-binding protein (152 aa).

It belongs to the SmpB family.

It is found in the cytoplasm. Its function is as follows. Required for rescue of stalled ribosomes mediated by trans-translation. Binds to transfer-messenger RNA (tmRNA), required for stable association of tmRNA with ribosomes. tmRNA and SmpB together mimic tRNA shape, replacing the anticodon stem-loop with SmpB. tmRNA is encoded by the ssrA gene; the 2 termini fold to resemble tRNA(Ala) and it encodes a 'tag peptide', a short internal open reading frame. During trans-translation Ala-aminoacylated tmRNA acts like a tRNA, entering the A-site of stalled ribosomes, displacing the stalled mRNA. The ribosome then switches to translate the ORF on the tmRNA; the nascent peptide is terminated with the 'tag peptide' encoded by the tmRNA and targeted for degradation. The ribosome is freed to recommence translation, which seems to be the essential function of trans-translation. This is SsrA-binding protein from Rickettsia bellii (strain RML369-C).